Consider the following 229-residue polypeptide: Uracil-DNA glycosylase (229 aa).

Catalysis depends on Asp-70, which acts as the Proton acceptor.

Belongs to the uracil-DNA glycosylase (UDG) superfamily. UNG family.

It localises to the cytoplasm. It carries out the reaction Hydrolyzes single-stranded DNA or mismatched double-stranded DNA and polynucleotides, releasing free uracil.. Functionally, excises uracil residues from the DNA which can arise as a result of misincorporation of dUMP residues by DNA polymerase or due to deamination of cytosine. The protein is Uracil-DNA glycosylase of Chlamydia trachomatis serovar L2b (strain UCH-1/proctitis).